A 968-amino-acid polypeptide reads, in one-letter code: MPFTFGQRWISDTESELGLGTVVAMDARTVTLLFPSTGENRLYARSDSPVTRVMFNPGDTITSHEGWQLHIDEVKEENGLLVYVGTRLDTEETNVTLREVLLDSKLVFSKPQDRLFAGQIDRMDRFALRYRARKFQSEQYRMPYSGLRGQRTNLIPHQLNIAHDVGRRHAPRVLLADEVGLGKTIEAGMILHQQLLSGAAERVLIIVPETLQHQWLVEMLRRFNLRFALFDDERYTEAQHDAYNPFETEQLVICSLDFARRNKQRLEHLCDAEWDLLVVDEAHHLVWSTDAPSREYMAIEQLAERVPGVLLLTATPEQLGMESHFARLRLLDPNRFHDFEQFVEEQKNYRPVADAVAMLLAGNKLSNDELNRLGDLIGEQDIEPLLQAANSDRDDAQAARDELVSMLMDRHGTSRVLFRNTRNGVKGFPKRELHTVKLPLPTQYQTAIKVSGIMGARKSAEDRARDMLYPEQIYQEFEGDTGTWWNFDPRVEWLMGYLTSHRSQKVLVICAKATTALQLEQVLREREGIRAAVFHEGMSIIERDRAAAWFAEEDTGAQVLLCSEIGSEGRNFQFASNLVMFDLPFNPDLLEQRIGRLDRIGQAHDIQIHVPYLEKTAQSVLVRWYHEGLDAFEHTCPTGRAIYDSAYASLINYLAAPEETDGFDDLIKSCREQHEALKAQLEQGRDRLLEIHSNGGEKAQQLAQSIEEQDDDTNLIAFAMNLFDIVGINQDDRGDNLIVLTPSDHMLVPDFPGLPEDGCTITFERDVALSREDAQFITWEHPLIRNGLDLILSGDTGSSTISLLKNKALPVGTLLVELVYVVEAQAPKQLQLNRFLPPTPVRMLLDKNGNNLAAQVEFETFNRQLSAVNRHTGSKLVNAVQQDVHAILQLGETQIEKSARALIDNARREADEKLSGELSRLEALRAVNPNIRDDELAAIDSNRQQVLESLNQAGWRLDALRFIVVTHQ.

The region spanning 164–334 (DVGRRHAPRV…FARLRLLDPN (171 aa)) is the Helicase ATP-binding domain. ATP is bound at residue 177–184 (DEVGLGKT). The DEAH box signature appears at 280 to 283 (DEAH). The region spanning 490 to 685 (RVEWLMGYLT…ALKAQLEQGR (196 aa)) is the Helicase C-terminal domain.

The protein belongs to the SNF2/RAD54 helicase family. RapA subfamily. As to quaternary structure, interacts with the RNAP. Has a higher affinity for the core RNAP than for the holoenzyme. Its ATPase activity is stimulated by binding to RNAP.

Its function is as follows. Transcription regulator that activates transcription by stimulating RNA polymerase (RNAP) recycling in case of stress conditions such as supercoiled DNA or high salt concentrations. Probably acts by releasing the RNAP, when it is trapped or immobilized on tightly supercoiled DNA. Does not activate transcription on linear DNA. Probably not involved in DNA repair. In Salmonella paratyphi A (strain ATCC 9150 / SARB42), this protein is RNA polymerase-associated protein RapA.